Here is a 562-residue protein sequence, read N- to C-terminus: Alpha-1D adrenergic receptor (562 aa).

Topologically, residues 1–90 are extracellular; the sequence is MTFRDILSVT…VGGLVVSAQG (90 aa). Disordered regions lie at residues 13 to 44 and 50 to 69; these read GPRASSSTGGSGAGGGAGTVGPEGPAVGGVPG and AVVGTGSGEDNQSSTAEAGA. Positions 21–44 are enriched in gly residues; sequence GGSGAGGGAGTVGPEGPAVGGVPG. 2 N-linked (GlcNAc...) asparagine glycosylation sites follow: Asn-60 and Asn-76. A helical transmembrane segment spans residues 91–115; sequence VGVGVFLAAFILTAVAGNLLVILSV. Residues 116 to 127 are Cytoplasmic-facing; sequence ACNRHLQTVTNY. The helical transmembrane segment at 128–153 threads the bilayer; it reads FIVNLAVADLLLSAAVLPFSATMEVL. The Extracellular portion of the chain corresponds to 154–163; sequence GFWPFGRTFC. A helical transmembrane segment spans residues 164-186; the sequence is DVWAAVDVLCCTASILSLCTISV. Over 187–207 the chain is Cytoplasmic; sequence DRYVGVRHSLKYPAIMTERKA. The helical transmembrane segment at 208–232 threads the bilayer; that stretch reads AAILALLWAVALVVSVGPLLGWKEP. The Extracellular portion of the chain corresponds to 233-245; that stretch reads VPPDERFCGITEE. A helical transmembrane segment spans residues 246–269; sequence VGYAIFSSVCSFYLPMAVIVVMYC. Over 270–342 the chain is Cytoplasmic; that stretch reads RVYVVARSTT…KFSREKKAAK (73 aa). A helical transmembrane segment spans residues 343–367; it reads TLAIVVGVFVLCWFPFFFVLPLGSL. At 368–374 the chain is on the extracellular side; sequence FPQLKPS. Residues 375–399 traverse the membrane as a helical segment; that stretch reads EGVFKVIFWLGYFNSCVNPLIYPCS. The Cytoplasmic segment spans residues 400 to 562; sequence SREFKRAFLR…DLSNLRETDI (163 aa). Cys-413 is lipidated: S-palmitoyl cysteine. Positions 444–472 are disordered; the sequence is QPAHRTPRGSPSPHCTPRPGLRRHAGGAG.

The protein belongs to the G-protein coupled receptor 1 family. Adrenergic receptor subfamily. ADRA1D sub-subfamily. In terms of assembly, interacts with FLNA (via filamin repeat 21); increases PKA-mediated phosphorylation of FLNA. Palmitoylated. Palmitoylation by ZDHHC21 may increase the expression of the receptor and regulate downstream signaling.

It is found in the cell membrane. This alpha-adrenergic receptor mediates its effect through the influx of extracellular calcium. This is Alpha-1D adrenergic receptor (Adra1d) from Mus musculus (Mouse).